The following is a 171-amino-acid chain: Adenine phosphoribosyltransferase (171 aa).

It belongs to the purine/pyrimidine phosphoribosyltransferase family. In terms of assembly, homodimer.

Its subcellular location is the cytoplasm. The catalysed reaction is AMP + diphosphate = 5-phospho-alpha-D-ribose 1-diphosphate + adenine. It functions in the pathway purine metabolism; AMP biosynthesis via salvage pathway; AMP from adenine: step 1/1. Its function is as follows. Catalyzes a salvage reaction resulting in the formation of AMP, that is energically less costly than de novo synthesis. In Gloeobacter violaceus (strain ATCC 29082 / PCC 7421), this protein is Adenine phosphoribosyltransferase.